A 424-amino-acid polypeptide reads, in one-letter code: Histidine--tRNA ligase (424 aa).

This sequence belongs to the class-II aminoacyl-tRNA synthetase family. As to quaternary structure, homodimer.

The protein localises to the cytoplasm. It carries out the reaction tRNA(His) + L-histidine + ATP = L-histidyl-tRNA(His) + AMP + diphosphate + H(+). The sequence is that of Histidine--tRNA ligase from Shigella dysenteriae serotype 1 (strain Sd197).